Consider the following 535-residue polypeptide: Probable glucomannan 4-beta-mannosyltransferase 14 (535 aa).

A helical transmembrane segment spans residues 42–62 (QVVSVLLFVDAAYMAIVVAIV). Asp-131 is an active-site residue. Residues Asp-193 and Asp-195 each coordinate substrate. The active site involves Asp-287. The next 4 helical transmembrane spans lie at 366-386 (IVVH…TVIF), 403-423 (ITIL…YWIL), 482-502 (IMVG…GRTY), and 503-523 (LYVY…GYVG).

This sequence belongs to the glycosyltransferase 2 family. Plant cellulose synthase-like A subfamily.

It is found in the golgi apparatus membrane. It carries out the reaction GDP-mannose + (glucomannan)n = GDP + (glucomannan)n+1.. In terms of biological role, probable mannan synthase which consists of a 4-beta-mannosyltransferase activity on mannan using GDP-mannose. The beta-1,4-mannan product is the backbone for galactomannan synthesis by galactomannan galactosyltransferase. Galactomannan is a noncellulosic polysaccharides of plant cell wall. The chain is Probable glucomannan 4-beta-mannosyltransferase 14 from Arabidopsis thaliana (Mouse-ear cress).